The primary structure comprises 254 residues: 5-oxoprolinase subunit A (254 aa).

The protein belongs to the LamB/PxpA family. Forms a complex composed of PxpA, PxpB and PxpC.

It catalyses the reaction 5-oxo-L-proline + ATP + 2 H2O = L-glutamate + ADP + phosphate + H(+). Catalyzes the cleavage of 5-oxoproline to form L-glutamate coupled to the hydrolysis of ATP to ADP and inorganic phosphate. The protein is 5-oxoprolinase subunit A of Rhodopseudomonas palustris (strain BisB5).